Here is a 536-residue protein sequence, read N- to C-terminus: Phosphoenolpyruvate carboxykinase (ATP) (536 aa).

Arginine 62, tyrosine 203, and lysine 209 together coordinate substrate. ATP is bound by residues lysine 209, histidine 228, and 244 to 252 (GLSGTGKTT). Mn(2+)-binding residues include lysine 209 and histidine 228. Aspartate 265 provides a ligand contact to Mn(2+). ATP-binding positions include glutamate 293, arginine 329, 445–446 (RI), and threonine 451. Arginine 329 lines the substrate pocket.

It belongs to the phosphoenolpyruvate carboxykinase (ATP) family. As to quaternary structure, monomer. Mn(2+) serves as cofactor.

The protein localises to the cytoplasm. The catalysed reaction is oxaloacetate + ATP = phosphoenolpyruvate + ADP + CO2. The protein operates within carbohydrate biosynthesis; gluconeogenesis. Its function is as follows. Involved in the gluconeogenesis. Catalyzes the conversion of oxaloacetate (OAA) to phosphoenolpyruvate (PEP) through direct phosphoryl transfer between the nucleoside triphosphate and OAA. The chain is Phosphoenolpyruvate carboxykinase (ATP) from Actinobacillus pleuropneumoniae serotype 7 (strain AP76).